The following is a 307-amino-acid chain: Protoheme IX farnesyltransferase (307 aa).

A run of 9 helical transmembrane segments spans residues 28-48 (LVIF…NPIL), 50-70 (FTAI…NQWW), 99-117 (FGIL…AINW), 121-138 (IILA…TIWL), 146-166 (IVIG…AVTG), 173-193 (VLLF…LALF), 219-239 (ILVY…IGAT), 241-261 (AIYG…SVPV), and 278-298 (LFGF…ADRY).

The protein belongs to the UbiA prenyltransferase family. Protoheme IX farnesyltransferase subfamily.

The protein localises to the cell inner membrane. It catalyses the reaction heme b + (2E,6E)-farnesyl diphosphate + H2O = Fe(II)-heme o + diphosphate. Its pathway is porphyrin-containing compound metabolism; heme O biosynthesis; heme O from protoheme: step 1/1. In terms of biological role, converts heme B (protoheme IX) to heme O by substitution of the vinyl group on carbon 2 of heme B porphyrin ring with a hydroxyethyl farnesyl side group. This is Protoheme IX farnesyltransferase from Erythrobacter litoralis (strain HTCC2594).